The primary structure comprises 238 residues: Ubiquinone/menaquinone biosynthesis C-methyltransferase UbiE (238 aa).

S-adenosyl-L-methionine is bound by residues T62 and D82.

The protein belongs to the class I-like SAM-binding methyltransferase superfamily. MenG/UbiE family.

The catalysed reaction is a 2-demethylmenaquinol + S-adenosyl-L-methionine = a menaquinol + S-adenosyl-L-homocysteine + H(+). It carries out the reaction a 2-methoxy-6-(all-trans-polyprenyl)benzene-1,4-diol + S-adenosyl-L-methionine = a 5-methoxy-2-methyl-3-(all-trans-polyprenyl)benzene-1,4-diol + S-adenosyl-L-homocysteine + H(+). Its pathway is quinol/quinone metabolism; menaquinone biosynthesis; menaquinol from 1,4-dihydroxy-2-naphthoate: step 2/2. It participates in cofactor biosynthesis; ubiquinone biosynthesis. Methyltransferase required for the conversion of demethylmenaquinol (DMKH2) to menaquinol (MKH2) and the conversion of 2-polyprenyl-6-methoxy-1,4-benzoquinol (DDMQH2) to 2-polyprenyl-3-methyl-6-methoxy-1,4-benzoquinol (DMQH2). This chain is Ubiquinone/menaquinone biosynthesis C-methyltransferase UbiE, found in Wolbachia pipientis wMel.